The chain runs to 60 residues: Large ribosomal subunit protein uL30 (60 aa).

It belongs to the universal ribosomal protein uL30 family. As to quaternary structure, part of the 50S ribosomal subunit.

This is Large ribosomal subunit protein uL30 from Idiomarina loihiensis (strain ATCC BAA-735 / DSM 15497 / L2-TR).